The sequence spans 1482 residues: Chromosome partition protein MukB (1482 aa).

34–41 (GGNGAGKS) contacts ATP. Coiled coils occupy residues 326-416 (LEAD…AIQY), 509-603 (RHLA…RAPV), 780-805 (RAARENRIESLHAERETLSERFATLS), 835-923 (EAEI…AKLE), 979-1116 (LSGN…AKAG), and 1210-1265 (EAIE…LQSV). The interval 666-783 (PGGAEDSRLN…TLPLFGRAAR (118 aa)) is flexible hinge.

It belongs to the SMC family. MukB subfamily. Homodimerization via its hinge domain. Binds to DNA via its C-terminal region. Interacts, and probably forms a ternary complex, with MukE and MukF via its C-terminal region. The complex formation is stimulated by calcium or magnesium. Interacts with tubulin-related protein FtsZ.

The protein localises to the cytoplasm. It is found in the nucleoid. Its function is as follows. Plays a central role in chromosome condensation, segregation and cell cycle progression. Functions as a homodimer, which is essential for chromosome partition. Involved in negative DNA supercoiling in vivo, and by this means organize and compact chromosomes. May achieve or facilitate chromosome segregation by condensation DNA from both sides of a centrally located replisome during cell division. This Enterobacter sp. (strain 638) protein is Chromosome partition protein MukB.